The sequence spans 338 residues: MKRMIALDGAQGEGGGQILRSALSLSMITGQPFTITGIRAGRAKPGLLRQHLTAVKAATEICRATVEGAELGSQRLVFRPGTVRGGDYRFAIGSAGSSTLVLQTVLPALWFADGPSRVEVSGGTDNPSAPPADFIRRVLEPLLAKMGIHQQTTLLRHGFYPAGGGVVATEVSPVASFNTLQLGERGNIVQMRGEVLLAGVPRHVAEREIATLVGSFSLHEQNIHNLPRDQGSGNTVSLEVESENITERFFIVGEKRVSAEVVAAQLVKEVKRYLASPAAVGEYLADQLVLPMALAGAGEFTVAHPSCHLLTNIAVVERFLSVRFSLVEADGVTRVSIE.

ATP contacts are provided by residues Gln103 and 283 to 287; that span reads YLADQ. His308 (tele-AMP-histidine intermediate) is an active-site residue.

This sequence belongs to the RNA 3'-terminal cyclase family. Type 1 subfamily.

The protein resides in the cytoplasm. It carries out the reaction a 3'-end 3'-phospho-ribonucleotide-RNA + ATP = a 3'-end 2',3'-cyclophospho-ribonucleotide-RNA + AMP + diphosphate. In terms of biological role, catalyzes the conversion of 3'-phosphate to a 2',3'-cyclic phosphodiester at the end of RNA. The mechanism of action of the enzyme occurs in 3 steps: (A) adenylation of the enzyme by ATP; (B) transfer of adenylate to an RNA-N3'P to produce RNA-N3'PP5'A; (C) and attack of the adjacent 2'-hydroxyl on the 3'-phosphorus in the diester linkage to produce the cyclic end product. The biological role of this enzyme is unknown but it is likely to function in some aspects of cellular RNA processing. In Escherichia coli O127:H6 (strain E2348/69 / EPEC), this protein is RNA 3'-terminal phosphate cyclase.